A 330-amino-acid chain; its full sequence is Aspartate--ammonia ligase (330 aa).

Belongs to the class-II aminoacyl-tRNA synthetase family. AsnA subfamily.

It localises to the cytoplasm. The enzyme catalyses L-aspartate + NH4(+) + ATP = L-asparagine + AMP + diphosphate + H(+). It participates in amino-acid biosynthesis; L-asparagine biosynthesis; L-asparagine from L-aspartate (ammonia route): step 1/1. The polypeptide is Aspartate--ammonia ligase (Actinobacillus succinogenes (strain ATCC 55618 / DSM 22257 / CCUG 43843 / 130Z)).